The chain runs to 299 residues: Recombination-associated protein RdgC (299 aa).

This sequence belongs to the RdgC family.

It is found in the cytoplasm. The protein localises to the nucleoid. In terms of biological role, may be involved in recombination. The sequence is that of Recombination-associated protein RdgC from Neisseria meningitidis serogroup B (strain ATCC BAA-335 / MC58).